Here is a 163-residue protein sequence, read N- to C-terminus: Ribonuclease P protein component (163 aa).

The tract at residues 1–68 (MDEKDVATQP…GGKLLSLKGD (68 aa)) is disordered. Over residues 8-19 (TQPQETGQNPRL) the composition is skewed to polar residues.

It belongs to the RnpA family. As to quaternary structure, consists of a catalytic RNA component (M1 or rnpB) and a protein subunit.

The catalysed reaction is Endonucleolytic cleavage of RNA, removing 5'-extranucleotides from tRNA precursor.. In terms of biological role, RNaseP catalyzes the removal of the 5'-leader sequence from pre-tRNA to produce the mature 5'-terminus. It can also cleave other RNA substrates such as 4.5S RNA. The protein component plays an auxiliary but essential role in vivo by binding to the 5'-leader sequence and broadening the substrate specificity of the ribozyme. This is Ribonuclease P protein component from Thermus thermophilus (strain ATCC BAA-163 / DSM 7039 / HB27).